Reading from the N-terminus, the 520-residue chain is Amine oxidase [flavin-containing] B (520 aa).

N-acetylserine is present on S2. The Cytoplasmic portion of the chain corresponds to 2-489 (SNKCDVIVVG…TFLERHLPSV (488 aa)). Residue K52 is modified to N6-acetyllysine. C397 carries the post-translational modification S-8alpha-FAD cysteine. The chain crosses the membrane as a helical; Anchor for type IV membrane protein span at residues 490–516 (PGLLKLLGLTTILSATALGFLAHKKGL). At 517 to 520 (FVRF) the chain is on the mitochondrial intermembrane side.

The protein belongs to the flavin monoamine oxidase family. In terms of assembly, monomer, homo- or heterodimer (containing two subunits of similar size). Each subunit contains a covalently bound flavin. Enzymatically active as monomer. Requires FAD as cofactor.

The protein localises to the mitochondrion outer membrane. The enzyme catalyses a secondary aliphatic amine + O2 + H2O = a primary amine + an aldehyde + H2O2. The catalysed reaction is (R)-adrenaline + O2 + H2O = (R)-3,4-dihydroxymandelaldehyde + methylamine + H2O2. It catalyses the reaction a primary methyl amine + O2 + H2O = an aldehyde + H2O2 + NH4(+). It carries out the reaction dopamine + O2 + H2O = 3,4-dihydroxyphenylacetaldehyde + H2O2 + NH4(+). The enzyme catalyses tyramine + O2 + H2O = (4-hydroxyphenyl)acetaldehyde + H2O2 + NH4(+). The catalysed reaction is (R)-noradrenaline + O2 + H2O = (R)-3,4-dihydroxymandelaldehyde + H2O2 + NH4(+). It catalyses the reaction benzylamine + O2 + H2O = benzaldehyde + H2O2 + NH4(+). It carries out the reaction 2-phenylethylamine + O2 + H2O = 2-phenylacetaldehyde + H2O2 + NH4(+). The enzyme catalyses N-acetylputrescine + O2 + H2O = 4-acetamidobutanal + H2O2 + NH4(+). In terms of biological role, catalyzes the oxidative deamination of primary and some secondary amines such as neurotransmitters, and exogenous amines including the tertiary amine, neurotoxin 1-methyl-4-phenyl-1,2,3,6-tetrahydropyridine (MPTP), with concomitant reduction of oxygen to hydrogen peroxide and participates in the metabolism of neuroactive and vasoactive amines in the central nervous system and peripheral tissues. Preferentially degrades benzylamine and phenylethylamine. This chain is Amine oxidase [flavin-containing] B, found in Rattus norvegicus (Rat).